Reading from the N-terminus, the 855-residue chain is Protein translocase subunit SecA (855 aa).

Residues glutamine 85, 103-107 (GEGKT), and aspartate 492 each bind ATP. The interval 794–845 (AAIHEESSSAAAPGPGQNQPGGPGGPSAGPVAPVRNLDKHGRNELCPCGSGK) is disordered. Residues 801-811 (SSAAAPGPGQN) are compositionally biased toward low complexity. Residues cysteine 839, cysteine 841, cysteine 850, and cysteine 851 each coordinate Zn(2+).

This sequence belongs to the SecA family. Monomer and homodimer. Part of the essential Sec protein translocation apparatus which comprises SecA, SecYEG and auxiliary proteins SecDF. Other proteins may also be involved. Requires Zn(2+) as cofactor.

Its subcellular location is the cell membrane. It localises to the cytoplasm. The enzyme catalyses ATP + H2O + cellular proteinSide 1 = ADP + phosphate + cellular proteinSide 2.. Part of the Sec protein translocase complex. Interacts with the SecYEG preprotein conducting channel. Has a central role in coupling the hydrolysis of ATP to the transfer of proteins into and across the cell membrane, serving as an ATP-driven molecular motor driving the stepwise translocation of polypeptide chains across the membrane. This is Protein translocase subunit SecA from Clostridium beijerinckii (strain ATCC 51743 / NCIMB 8052) (Clostridium acetobutylicum).